The chain runs to 349 residues: Peroxidase C3 (349 aa).

The N-terminal stretch at 1 to 29 (MGFSPLISCSAMGALILSCLLLQASNSNA) is a signal peptide. 4 disulfides stabilise this stretch: cysteine 40–cysteine 120, cysteine 73–cysteine 78, cysteine 126–cysteine 329, and cysteine 206–cysteine 238. Histidine 71 functions as the Proton acceptor in the catalytic mechanism. Ca(2+) contacts are provided by aspartate 72, valine 75, glycine 77, aspartate 79, and serine 81. An N-linked (GlcNAc...) asparagine glycan is attached at asparagine 86. Proline 168 is a binding site for substrate. Histidine 199 serves as a coordination point for heme b. Threonine 200 is a binding site for Ca(2+). N-linked (GlcNAc...) asparagine glycosylation is found at asparagine 217 and asparagine 243. Ca(2+) contacts are provided by aspartate 251, threonine 254, and aspartate 259.

It belongs to the peroxidase family. Classical plant (class III) peroxidase subfamily. Requires Ca(2+) as cofactor. The cofactor is heme b.

Its subcellular location is the secreted. It localises to the vacuole. It carries out the reaction 2 a phenolic donor + H2O2 = 2 a phenolic radical donor + 2 H2O. Its function is as follows. Removal of H(2)O(2), oxidation of toxic reductants, biosynthesis and degradation of lignin, suberization, auxin catabolism, response to environmental stresses such as wounding, pathogen attack and oxidative stress. These functions might be dependent on each isozyme/isoform in each plant tissue. The polypeptide is Peroxidase C3 (PRXC3) (Armoracia rusticana (Horseradish)).